Here is a 156-residue protein sequence, read N- to C-terminus: Small ribosomal subunit protein uS7 (156 aa).

This sequence belongs to the universal ribosomal protein uS7 family. In terms of assembly, part of the 30S ribosomal subunit. Contacts proteins S9 and S11.

One of the primary rRNA binding proteins, it binds directly to 16S rRNA where it nucleates assembly of the head domain of the 30S subunit. Is located at the subunit interface close to the decoding center, probably blocks exit of the E-site tRNA. This is Small ribosomal subunit protein uS7 from Parasynechococcus marenigrum (strain WH8102).